Reading from the N-terminus, the 617-residue chain is Acetolactate synthase large subunit (617 aa).

Glutamate 71 is a binding site for thiamine diphosphate. FAD contacts are provided by residues arginine 173, histidine 281–arginine 302, and glutamate 324–aspartate 343. The thiamine pyrophosphate binding stretch occupies residues glutamine 413 to tryptophan 492. Aspartate 463 and asparagine 490 together coordinate Mg(2+).

This sequence belongs to the TPP enzyme family. As to quaternary structure, dimer of large and small chains. Mg(2+) serves as cofactor. Thiamine diphosphate is required as a cofactor.

It carries out the reaction 2 pyruvate + H(+) = (2S)-2-acetolactate + CO2. It participates in amino-acid biosynthesis; L-isoleucine biosynthesis; L-isoleucine from 2-oxobutanoate: step 1/4. The protein operates within amino-acid biosynthesis; L-valine biosynthesis; L-valine from pyruvate: step 1/4. The protein is Acetolactate synthase large subunit (ilvB) of Parasynechococcus marenigrum (strain WH8102).